The primary structure comprises 102 residues: Small ribosomal subunit protein bS6 (102 aa).

It belongs to the bacterial ribosomal protein bS6 family.

In terms of biological role, binds together with bS18 to 16S ribosomal RNA. This Deinococcus geothermalis (strain DSM 11300 / CIP 105573 / AG-3a) protein is Small ribosomal subunit protein bS6.